Consider the following 340-residue polypeptide: Ketol-acid reductoisomerase (NADP(+)) (340 aa).

Residues 3-182 enclose the KARI N-terminal Rossmann domain; that stretch reads VQMEYEKDVK…GAARVGLLET (180 aa). NADP(+)-binding positions include 26 to 29, R49, S53, and 83 to 86; these read YGSQ and DEIQ. The active site involves H108. G134 is an NADP(+) binding site. Positions 183–328 constitute a KARI C-terminal knotted domain; sequence TYKEETEEDL…AELRKAMPFV (146 aa). Mg(2+) is bound by residues D191, E195, E227, and E231. S252 serves as a coordination point for substrate.

This sequence belongs to the ketol-acid reductoisomerase family. Mg(2+) is required as a cofactor.

The enzyme catalyses (2R)-2,3-dihydroxy-3-methylbutanoate + NADP(+) = (2S)-2-acetolactate + NADPH + H(+). The catalysed reaction is (2R,3R)-2,3-dihydroxy-3-methylpentanoate + NADP(+) = (S)-2-ethyl-2-hydroxy-3-oxobutanoate + NADPH + H(+). It functions in the pathway amino-acid biosynthesis; L-isoleucine biosynthesis; L-isoleucine from 2-oxobutanoate: step 2/4. It participates in amino-acid biosynthesis; L-valine biosynthesis; L-valine from pyruvate: step 2/4. In terms of biological role, involved in the biosynthesis of branched-chain amino acids (BCAA). Catalyzes an alkyl-migration followed by a ketol-acid reduction of (S)-2-acetolactate (S2AL) to yield (R)-2,3-dihydroxy-isovalerate. In the isomerase reaction, S2AL is rearranged via a Mg-dependent methyl migration to produce 3-hydroxy-3-methyl-2-ketobutyrate (HMKB). In the reductase reaction, this 2-ketoacid undergoes a metal-dependent reduction by NADPH to yield (R)-2,3-dihydroxy-isovalerate. This Streptococcus pneumoniae (strain CGSP14) protein is Ketol-acid reductoisomerase (NADP(+)).